A 449-amino-acid chain; its full sequence is Bifunctional protein GlmU (449 aa).

Residues 1–228 (MSTALVILAA…EAETLGINSR (228 aa)) are pyrophosphorylase. Residues 8–11 (LAAG), K22, Q75, 80–81 (GT), 103–105 (YGD), G140, E154, N169, and N226 contribute to the UDP-N-acetyl-alpha-D-glucosamine site. D105 provides a ligand contact to Mg(2+). N226 provides a ligand contact to Mg(2+). The tract at residues 229 to 249 (ADLAAAEAVFQAHARAELLDI) is linker. The tract at residues 250–449 (GVTLTAPETV…RAKKAAKAKG (200 aa)) is N-acetyltransferase. Positions 315 and 333 each coordinate UDP-N-acetyl-alpha-D-glucosamine. The active-site Proton acceptor is the H345. Positions 348 and 359 each coordinate UDP-N-acetyl-alpha-D-glucosamine. Acetyl-CoA contacts are provided by residues A362, 368-369 (NY), S387, T405, and R422.

In the N-terminal section; belongs to the N-acetylglucosamine-1-phosphate uridyltransferase family. This sequence in the C-terminal section; belongs to the transferase hexapeptide repeat family. In terms of assembly, homotrimer. It depends on Mg(2+) as a cofactor.

It localises to the cytoplasm. It catalyses the reaction alpha-D-glucosamine 1-phosphate + acetyl-CoA = N-acetyl-alpha-D-glucosamine 1-phosphate + CoA + H(+). The enzyme catalyses N-acetyl-alpha-D-glucosamine 1-phosphate + UTP + H(+) = UDP-N-acetyl-alpha-D-glucosamine + diphosphate. The protein operates within nucleotide-sugar biosynthesis; UDP-N-acetyl-alpha-D-glucosamine biosynthesis; N-acetyl-alpha-D-glucosamine 1-phosphate from alpha-D-glucosamine 6-phosphate (route II): step 2/2. It participates in nucleotide-sugar biosynthesis; UDP-N-acetyl-alpha-D-glucosamine biosynthesis; UDP-N-acetyl-alpha-D-glucosamine from N-acetyl-alpha-D-glucosamine 1-phosphate: step 1/1. It functions in the pathway bacterial outer membrane biogenesis; LPS lipid A biosynthesis. In terms of biological role, catalyzes the last two sequential reactions in the de novo biosynthetic pathway for UDP-N-acetylglucosamine (UDP-GlcNAc). The C-terminal domain catalyzes the transfer of acetyl group from acetyl coenzyme A to glucosamine-1-phosphate (GlcN-1-P) to produce N-acetylglucosamine-1-phosphate (GlcNAc-1-P), which is converted into UDP-GlcNAc by the transfer of uridine 5-monophosphate (from uridine 5-triphosphate), a reaction catalyzed by the N-terminal domain. The protein is Bifunctional protein GlmU of Ruegeria sp. (strain TM1040) (Silicibacter sp.).